Consider the following 316-residue polypeptide: MRHLRALCAIADTGSVRRAARELGVSQPALTTQLRRIEQSLGAELFHRGRDGCRPTLLGRTVLSRARTVVDSMAVLVEEARAEAAALGRPGPRLRVGSTASRIVGDWLRRLRGRMPETDITLQVDVSATVLLRCCAPAALDLAFVHEVEGSPLRVPDGLVQHTLLEREPQFISLAPDHPAAARPVVDLADLAQDRWMVDPSVDGEWDGVRRVLAAAGIDPPVLHGDYLTTASLVALGEAVAPCQPTSGPRDDMVIRPLRDDPLAVRLLLVTPPRCPAAGPAYEELTAAYAAAALRAGPYREWLEGAPERPGALLGG.

In terms of domain architecture, HTH lysR-type spans 1–56 (MRHLRALCAIADTGSVRRAARELGVSQPALTTQLRRIEQSLGAELFHRGRDGCRPT). The segment at residues 16 to 35 (VRRAARELGVSQPALTTQLR) is a DNA-binding region (H-T-H motif).

Belongs to the LysR transcriptional regulatory family.

Functionally, transcriptional trans-activator of the gene (mprA) for the small neutral protease. The protein is Small neutral protease regulatory protein (mprR) of Streptomyces coelicolor.